Here is a 487-residue protein sequence, read N- to C-terminus: Glutamate--tRNA ligase (487 aa).

A 'HIGH' region motif is present at residues 11–21 (PSPTGYPHLGN). Zn(2+) is bound by residues C108, C110, C135, and D137. Residues 245–249 (KLSKR) carry the 'KMSKS' region motif. K248 serves as a coordination point for ATP.

Belongs to the class-I aminoacyl-tRNA synthetase family. Glutamate--tRNA ligase type 1 subfamily. In terms of assembly, monomer. Zn(2+) serves as cofactor.

It is found in the cytoplasm. The enzyme catalyses tRNA(Glu) + L-glutamate + ATP = L-glutamyl-tRNA(Glu) + AMP + diphosphate. Functionally, catalyzes the attachment of glutamate to tRNA(Glu) in a two-step reaction: glutamate is first activated by ATP to form Glu-AMP and then transferred to the acceptor end of tRNA(Glu). The protein is Glutamate--tRNA ligase of Dehalococcoides mccartyi (strain CBDB1).